The following is a 492-amino-acid chain: Tyrosine--tRNA ligase, mitochondrial (492 aa).

Tyr-89 provides a ligand contact to L-tyrosine. Residue Asp-93 coordinates ATP. The short motif at 94-103 is the 'HIGH' region element; it reads PTAQSLHLGN. Asp-133, Tyr-239, Gln-243, Asp-246, and Gln-265 together coordinate L-tyrosine. The 'KMSKS' region signature appears at 303–307; it reads KFGKS. Lys-306 contributes to the ATP binding site.

Belongs to the class-I aminoacyl-tRNA synthetase family. Homodimer.

Its subcellular location is the mitochondrion matrix. It carries out the reaction tRNA(Tyr) + L-tyrosine + ATP = L-tyrosyl-tRNA(Tyr) + AMP + diphosphate + H(+). Functionally, catalyzes the attachment of tyrosine to tRNA(Tyr) in a two-step reaction: tyrosine is first activated by ATP to form Tyr-AMP and then transferred to the acceptor end of tRNA(Tyr). The sequence is that of Tyrosine--tRNA ligase, mitochondrial (MSY1) from Saccharomyces cerevisiae (strain ATCC 204508 / S288c) (Baker's yeast).